The chain runs to 722 residues: Polyribonucleotide nucleotidyltransferase (722 aa).

Mg(2+) contacts are provided by Asp487 and Asp493. Residues 554–613 (PRIETFKIPTDKIREVIGTGGKVIREIVEKTGAKVNIEDDGTVKVASSDGESIKAAIKWI) form the KH domain. Residues 623–691 (GEIYEGTVVK…DRGKTRLSMK (69 aa)) form the S1 motif domain. A disordered region spans residues 697-722 (TGEDLEAKQKAEAKAEGEAPAQAAGE). The segment covering 701–713 (LEAKQKAEAKAEG) has biased composition (basic and acidic residues).

It belongs to the polyribonucleotide nucleotidyltransferase family. The cofactor is Mg(2+).

Its subcellular location is the cytoplasm. It catalyses the reaction RNA(n+1) + phosphate = RNA(n) + a ribonucleoside 5'-diphosphate. Its function is as follows. Involved in mRNA degradation. Catalyzes the phosphorolysis of single-stranded polyribonucleotides processively in the 3'- to 5'-direction. This is Polyribonucleotide nucleotidyltransferase from Rhodopseudomonas palustris (strain ATCC BAA-98 / CGA009).